The chain runs to 337 residues: 1-aminocyclopropane-1-carboxylate deaminase (337 aa).

N6-(pyridoxal phosphate)lysine is present on Lys-50. Residue Ser-77 is the Nucleophile of the active site.

Belongs to the ACC deaminase/D-cysteine desulfhydrase family. Homotrimer. The cofactor is pyridoxal 5'-phosphate.

It catalyses the reaction 1-aminocyclopropane-1-carboxylate + H2O = 2-oxobutanoate + NH4(+). Functionally, catalyzes a cyclopropane ring-opening reaction, the irreversible conversion of 1-aminocyclopropane-1-carboxylate (ACC) to ammonia and alpha-ketobutyrate. Allows growth on ACC as a nitrogen source. In Methylobacterium nodulans (strain LMG 21967 / CNCM I-2342 / ORS 2060), this protein is 1-aminocyclopropane-1-carboxylate deaminase.